We begin with the raw amino-acid sequence, 188 residues long: HTH-type transcriptional regulator LmrA (188 aa).

Residues 4 to 64 (GDSREKILSA…IEAVNEMKEY (61 aa)) form the HTH tetR-type domain. A DNA-binding region (H-T-H motif) is located at residues 27–46 (GLNQIIKESGAPKGSLYYHF).

In terms of biological role, acts as a repressor of the lincomycin-resistance (lmrAB) and yxaGH operons. The polypeptide is HTH-type transcriptional regulator LmrA (lmrA) (Bacillus subtilis (strain 168)).